Reading from the N-terminus, the 256-residue chain is Small ribosomal subunit protein eS1 (256 aa).

Over residues 1–18 (MAVGKNKRLSKGKKGVKK) the composition is skewed to basic residues. Positions 1-20 (MAVGKNKRLSKGKKGVKKRT) are disordered. Residue alanine 2 is modified to N-acetylalanine; partial.

This sequence belongs to the eukaryotic ribosomal protein eS1 family. Component of the small ribosomal subunit. Mature ribosomes consist of a small (40S) and a large (60S) subunit. The 40S subunit contains about 33 different proteins and 1 molecule of RNA (18S). The 60S subunit contains about 49 different proteins and 3 molecules of RNA (25S, 5.8S and 5S).

Its subcellular location is the cytoplasm. The chain is Small ribosomal subunit protein eS1 (rps1) from Aspergillus clavatus (strain ATCC 1007 / CBS 513.65 / DSM 816 / NCTC 3887 / NRRL 1 / QM 1276 / 107).